Consider the following 354-residue polypeptide: tRNA N6-adenosine threonylcarbamoyltransferase (354 aa).

Fe cation contacts are provided by H115 and H119. Substrate is bound by residues 138-142 (LVSGG), D171, G184, and N285. Fe cation is bound at residue D313.

The protein belongs to the KAE1 / TsaD family. Requires Fe(2+) as cofactor.

The protein localises to the cytoplasm. The catalysed reaction is L-threonylcarbamoyladenylate + adenosine(37) in tRNA = N(6)-L-threonylcarbamoyladenosine(37) in tRNA + AMP + H(+). Functionally, required for the formation of a threonylcarbamoyl group on adenosine at position 37 (t(6)A37) in tRNAs that read codons beginning with adenine. Is involved in the transfer of the threonylcarbamoyl moiety of threonylcarbamoyl-AMP (TC-AMP) to the N6 group of A37, together with TsaE and TsaB. TsaD likely plays a direct catalytic role in this reaction. The polypeptide is tRNA N6-adenosine threonylcarbamoyltransferase (Albidiferax ferrireducens (strain ATCC BAA-621 / DSM 15236 / T118) (Rhodoferax ferrireducens)).